The chain runs to 176 residues: dCTP deaminase (176 aa).

DCTP is bound by residues 99–104 (RSTLAR) and D115. The Proton donor/acceptor role is filled by E125. Position 163 (Q163) interacts with dCTP.

Belongs to the dCTP deaminase family. Homotrimer.

It carries out the reaction dCTP + H2O + H(+) = dUTP + NH4(+). Its pathway is pyrimidine metabolism; dUMP biosynthesis; dUMP from dCTP (dUTP route): step 1/2. Functionally, catalyzes the deamination of dCTP to dUTP. In Pyrobaculum neutrophilum (strain DSM 2338 / JCM 9278 / NBRC 100436 / V24Sta) (Thermoproteus neutrophilus), this protein is dCTP deaminase.